Consider the following 424-residue polypeptide: Virion nicking-joining enzyme (424 aa).

It belongs to the orthopoxvirus OPG042 family.

The protein resides in the virion. Functionally, DNA nicking enzyme that cleaves extruded cruciform DNA at its tip. Probably nicks viral hairpins. The protein is Virion nicking-joining enzyme (OPG042) of Cynomys gunnisoni (Gunnison's prairie dog).